Consider the following 147-residue polypeptide: Sec-independent protein translocase protein TatB (147 aa).

A helical transmembrane segment spans residues 2–22; it reads FDGIGFMELLLIGVLGLVVLG. The segment at 68–147 is disordered; the sequence is ESKGLSNLSP…DTRSNPKANG (80 aa). Polar residues predominate over residues 71-97; that stretch reads GLSNLSPELQESIDQLKQAAQSVNRPY. Residues 112–133 show a composition bias toward low complexity; it reads PASQSVSSEASPTASSAPTSEP.

It belongs to the TatB family. The Tat system comprises two distinct complexes: a TatABC complex, containing multiple copies of TatA, TatB and TatC subunits, and a separate TatA complex, containing only TatA subunits. Substrates initially bind to the TatABC complex, which probably triggers association of the separate TatA complex to form the active translocon.

Its subcellular location is the cell inner membrane. Functionally, part of the twin-arginine translocation (Tat) system that transports large folded proteins containing a characteristic twin-arginine motif in their signal peptide across membranes. Together with TatC, TatB is part of a receptor directly interacting with Tat signal peptides. TatB may form an oligomeric binding site that transiently accommodates folded Tat precursor proteins before their translocation. This chain is Sec-independent protein translocase protein TatB, found in Shewanella sp. (strain MR-4).